The chain runs to 515 residues: 2,3-bisphosphoglycerate-independent phosphoglycerate mutase (515 aa).

Mn(2+) contacts are provided by Asp14 and Ser64. The Phosphoserine intermediate role is filled by Ser64. Substrate-binding positions include His125, 155–156 (RD), Arg187, Arg193, 263–266 (RADR), and Lys337. Mn(2+) is bound by residues Asp404, His408, Asp445, His446, and His464.

This sequence belongs to the BPG-independent phosphoglycerate mutase family. Monomer. Mn(2+) is required as a cofactor.

The catalysed reaction is (2R)-2-phosphoglycerate = (2R)-3-phosphoglycerate. Its pathway is carbohydrate degradation; glycolysis; pyruvate from D-glyceraldehyde 3-phosphate: step 3/5. Functionally, catalyzes the interconversion of 2-phosphoglycerate and 3-phosphoglycerate. This chain is 2,3-bisphosphoglycerate-independent phosphoglycerate mutase, found in Cronobacter sakazakii (strain ATCC BAA-894) (Enterobacter sakazakii).